The sequence spans 119 residues: MTILTIILSLLVALEFFYIMYLETFATSSKTTSRVFNMGKEELERSSVQTLFKNQGIYNGLIGLGLIYAIFFSSAQLEIVRLLLIYIILVALYGSLTSNKKIILTQGGLAILALISSFF.

This is an uncharacterized protein from Lactococcus lactis subsp. lactis (strain IL1403) (Streptococcus lactis).